A 262-amino-acid chain; its full sequence is 3-methyl-2-oxobutanoate hydroxymethyltransferase (262 aa).

Mg(2+)-binding residues include Asp-44 and Asp-83. Residues 44–45 (DS), Asp-83, and Lys-112 contribute to the 3-methyl-2-oxobutanoate site. Glu-114 is a Mg(2+) binding site. The active-site Proton acceptor is the Glu-177.

This sequence belongs to the PanB family. Homodecamer; pentamer of dimers. Requires Mg(2+) as cofactor.

Its subcellular location is the cytoplasm. It catalyses the reaction 3-methyl-2-oxobutanoate + (6R)-5,10-methylene-5,6,7,8-tetrahydrofolate + H2O = 2-dehydropantoate + (6S)-5,6,7,8-tetrahydrofolate. It functions in the pathway cofactor biosynthesis; coenzyme A biosynthesis. In terms of biological role, catalyzes the reversible reaction in which hydroxymethyl group from 5,10-methylenetetrahydrofolate is transferred onto alpha-ketoisovalerate to form ketopantoate. In Metallosphaera sedula (strain ATCC 51363 / DSM 5348 / JCM 9185 / NBRC 15509 / TH2), this protein is 3-methyl-2-oxobutanoate hydroxymethyltransferase.